A 121-amino-acid polypeptide reads, in one-letter code: Small ribosomal subunit protein uS13 (121 aa).

The interval 89–121 (MRHRRGLPVRGQNTKNNARTRKGKKVSIAGKKK) is disordered. Positions 106 to 121 (ARTRKGKKVSIAGKKK) are enriched in basic residues.

This sequence belongs to the universal ribosomal protein uS13 family. In terms of assembly, part of the 30S ribosomal subunit. Forms a loose heterodimer with protein S19. Forms two bridges to the 50S subunit in the 70S ribosome.

Its function is as follows. Located at the top of the head of the 30S subunit, it contacts several helices of the 16S rRNA. In the 70S ribosome it contacts the 23S rRNA (bridge B1a) and protein L5 of the 50S subunit (bridge B1b), connecting the 2 subunits; these bridges are implicated in subunit movement. Contacts the tRNAs in the A and P-sites. In Latilactobacillus sakei subsp. sakei (strain 23K) (Lactobacillus sakei subsp. sakei), this protein is Small ribosomal subunit protein uS13.